Reading from the N-terminus, the 172-residue chain is uncharacterized protein (172 aa).

Positions 1–28 (MAAAGVTAKAGGGTSAAAASLIRARSPA) are enriched in low complexity. The disordered stretch occupies residues 1–172 (MAAAGVTAKA…GGRRSGRDAG (172 aa)). The segment covering 58–68 (PRRRSRARRGH) has biased composition (basic residues). Residues 80 to 100 (TVGGEGQASQIGGGGGGGGGR) are compositionally biased toward gly residues. Low complexity predominate over residues 129–138 (PGLASSPGVA). Residues 139-165 (PAGGSGGLWSGAGLCSGLGARGFPGGR) show a composition bias toward gly residues.

This is an uncharacterized protein from Homo sapiens (Human).